The sequence spans 529 residues: NADPH-dependent thioredoxin reductase 3 (529 aa).

The N-terminal 67 residues, 1-67 (MAASPKIGIG…SSDSLRLRVS (67 aa)), are a transit peptide targeting the chloroplast. The segment at 54 to 78 (TRTRSSDSLRLRVSATANSPSSSSS) is disordered. The span at 64–78 (LRVSATANSPSSSSS) shows a compositional bias: low complexity. Residues 91–94 (SGPA), 113–120 (EGYQMGGV), asparagine 133, valine 166, and cysteine 220 each bind FAD. A disulfide bridge connects residues cysteine 217 and cysteine 220. Positions 240, 265, 324, and 344 each coordinate NADP(+). Residues aspartate 364 and 371–374 (RQAV) contribute to the FAD site. Arginine 371 lines the NADP(+) pocket. The 127-residue stretch at 403–529 (PQTEEAKKEF…EYREFIEANK (127 aa)) folds into the Thioredoxin domain. Catalysis depends on nucleophile residues cysteine 454 and cysteine 457. Cysteine 454 and cysteine 457 are disulfide-bonded.

It belongs to the class-II pyridine nucleotide-disulfide oxidoreductase family. In terms of assembly, may homodimerize. Interacts with the 2-Cys peroxiredoxin BAS1. FAD serves as cofactor.

It is found in the plastid. The protein resides in the chloroplast. The catalysed reaction is [thioredoxin]-dithiol + NADP(+) = [thioredoxin]-disulfide + NADPH + H(+). In terms of biological role, thioredoxin reductase (TR) that exhibits both TR and thioredoxin (Trx) activities. Contains a C-terminal functional Trx domain. Functions as an electron donor for plastidial 2-Cys peroxiredoxins and participates in a NADPH-dependent hydrogen peroxide scavenging system in chloroplasts in the dark. Required for chlorophyll biosynthesis and biogenesis of the photosynthetic apparatus. Activates aerobic cyclase which converts Mg-protoporhyrin monomethyl ester into protochlorophyllide. Involved in a light-dependent regulation of starch biosynthesis by redox activation of the ADP-glucose pyrophosphorylase (AGPase), a central enzyme of starch synthesis. In Arabidopsis thaliana (Mouse-ear cress), this protein is NADPH-dependent thioredoxin reductase 3.